A 381-amino-acid polypeptide reads, in one-letter code: 1-deoxy-D-xylulose 5-phosphate reductoisomerase (381 aa).

Residues threonine 11, glycine 12, serine 13, isoleucine 14, asparagine 37, and asparagine 121 each contribute to the NADPH site. Lysine 122 provides a ligand contact to 1-deoxy-D-xylulose 5-phosphate. Glutamate 123 contacts NADPH. Residue aspartate 147 participates in Mn(2+) binding. Residues serine 148, glutamate 149, serine 173, and histidine 196 each coordinate 1-deoxy-D-xylulose 5-phosphate. Glutamate 149 provides a ligand contact to Mn(2+). Residue glycine 202 participates in NADPH binding. The 1-deoxy-D-xylulose 5-phosphate site is built by serine 209, asparagine 214, lysine 215, and glutamate 218. Position 218 (glutamate 218) interacts with Mn(2+).

The protein belongs to the DXR family. It depends on Mg(2+) as a cofactor. The cofactor is Mn(2+).

It catalyses the reaction 2-C-methyl-D-erythritol 4-phosphate + NADP(+) = 1-deoxy-D-xylulose 5-phosphate + NADPH + H(+). It participates in isoprenoid biosynthesis; isopentenyl diphosphate biosynthesis via DXP pathway; isopentenyl diphosphate from 1-deoxy-D-xylulose 5-phosphate: step 1/6. Its function is as follows. Catalyzes the NADPH-dependent rearrangement and reduction of 1-deoxy-D-xylulose-5-phosphate (DXP) to 2-C-methyl-D-erythritol 4-phosphate (MEP). This is 1-deoxy-D-xylulose 5-phosphate reductoisomerase from Ruminiclostridium cellulolyticum (strain ATCC 35319 / DSM 5812 / JCM 6584 / H10) (Clostridium cellulolyticum).